The following is a 326-amino-acid chain: Thioredoxin reductase (326 aa).

Residue 40-47 (TGNNKGGQ) participates in FAD binding. A disulfide bridge links Cys141 with Cys144. 291-300 (DVIDHVYKQA) serves as a coordination point for FAD.

This sequence belongs to the class-II pyridine nucleotide-disulfide oxidoreductase family. In terms of assembly, homodimer. FAD serves as cofactor.

It localises to the cytoplasm. It catalyses the reaction [thioredoxin]-dithiol + NADP(+) = [thioredoxin]-disulfide + NADPH + H(+). The sequence is that of Thioredoxin reductase (trxB) from Buchnera aphidicola subsp. Baizongia pistaciae (strain Bp).